A 3969-amino-acid polypeptide reads, in one-letter code: Histone-lysine N-methyltransferase 2A (3969 aa).

3 disordered regions span residues 1 to 108 (MAHS…LLRV), 132 to 253 (VFGE…EDSL), and 301 to 352 (RRRG…RQSP). Positions 6-25 (RWRFPARPGTTGGGGGGGRR) match the Menin-binding motif (MBM) motif. The segment covering 15-29 (TTGGGGGGGRRGLGG) has biased composition (gly residues). Composition is skewed to low complexity over residues 59–69 (AVAAAAAAAGS) and 77–104 (GAAAASAASSSSASSSSSSSSSASSGPA). The Integrase domain-binding motif 1 (IBM1) motif lies at 123–134 (GTNLRRFRAVFG). Phosphoserine; by CK2 occurs at positions 136 and 142. Residues 147 to 152 (QFLGFG) carry the Integrase domain-binding motif 2 (IBM2) motif. At Ser153 the chain carries Phosphoserine. The segment at residues 169 to 180 (KTSPRKPRGRPR) is a DNA-binding region (a.T hook 1). The residue at position 197 (Ser197) is a Phosphoserine. Composition is skewed to basic and acidic residues over residues 202–220 (SETKSGDKIKKKDSKSIEK) and 237–253 (HGKDISELPKGNKEDSL). The a.T hook 2 DNA-binding region spans 217 to 227 (SIEKKRGRPPT). Lys239 is modified (N6-acetyllysine). The segment at residues 301-309 (RRRGRPPST) is a DNA-binding region (a.T hook 3). Residues 323–347 (ELEKPQKVRKDKEGTPPLTKEDKTV) show a composition bias toward basic and acidic residues. Residue Lys373 is modified to N6-acetyllysine. The segment at 445 to 585 (STPNSRFSAP…SSISDHTPWL (141 aa)) is disordered. Low complexity predominate over residues 452-491 (SAPSCGSSEKSSAASQHSSQMSSDSSRSSSPSVDTSTDSQ). Phosphoserine is present on Ser518. Residues 546-559 (LSTLQSAPQQQTSS) show a composition bias toward low complexity. The span at 560–573 (SPPPPLLTPPPPLQ) shows a compositional bias: pro residues. An N6-acetyllysine modification is found at Lys636. The residue at position 680 (Ser680) is a Phosphoserine. Disordered regions lie at residues 713–780 (ESVT…SSSL), 798–949 (FPSH…TSVT), 1038–1066 (EKSKSLKQTDQPKAQGQESDSSETSVRGP), and 1106–1166 (SSMG…VPED). The span at 716-732 (TLPSNRTSAGTSSSGVS) shows a compositional bias: polar residues. Positions 762-780 (LSSSELSPLTPPSSVSSSL) are enriched in low complexity. The segment covering 798–808 (FPSHSLTQSGE) has biased composition (polar residues). The span at 820 to 841 (TSAPAEPFSSSSPTPLFPWFTP) shows a compositional bias: low complexity. Thr840 is subject to Phosphothreonine. A compositionally biased stretch (basic and acidic residues) spans 846-890 (ERGRNKDKAPEELSKDRDADKSVEKDKSRERDREREKENKRESRK). Phosphoserine is present on residues Ser926 and Ser1056. Over residues 1043–1062 (LKQTDQPKAQGQESDSSETS) the composition is skewed to polar residues. An N6-acetyllysine modification is found at Lys1130. A CXXC-type zinc finger spans residues 1147 to 1195 (KKGRRSRRCGQCPGCQVPEDCGVCTNCLDKPKFGGRNIKKQCCKMRKCQ). 8 residues coordinate Zn(2+): Cys1155, Cys1158, Cys1161, Cys1167, Cys1170, Cys1173, Cys1189, and Cys1194. Residues 1200 to 1375 (MPSKAYLQKQ…PPVNKQENAG (176 aa)) form a disordered region. A compositionally biased stretch (basic and acidic residues) spans 1220 to 1232 (SKTSEKKDSKESS). Over residues 1233–1243 (VVKNVVDSSQK) the composition is skewed to low complexity. The residue at position 1235 (Lys1235) is an N6-acetyllysine. Basic and acidic residues predominate over residues 1248-1273 (AREDPAPKKSSSEPPPRKPVEEKSEE). Residues 1284-1300 (KQATTPASRKSSKQVSQ) are compositionally biased toward polar residues. Pro residues predominate over residues 1304-1313 (VIPPQPPTTG). 3 consecutive PHD-type zinc fingers follow at residues 1431 to 1482 (RVVC…CKFC), 1479 to 1533 (CKFC…CVRC), and 1566 to 1627 (GNFC…CTER). Positions 1584–1600 (KMMQCGKCDRWVHSKCE) are interaction with histone H3K4me3. The Bromo domain occupies 1635–1765 (ALEKELQISL…SFFIRQMERV (131 aa)). 2 disordered regions span residues 1663–1713 (YRQA…GVKR) and 1806–1869 (QERE…GIED). Positions 1826–1847 (APKPKGPGEPDSPTPLHPPTPP) are enriched in pro residues. Residue Ser1837 is modified to Phosphoserine. Thr1845 carries the post-translational modification Phosphothreonine. Ser1858 carries the post-translational modification Phosphoserine. A C2HC pre-PHD-type zinc finger spans residues 1870 to 1910 (NRQCALCLTYGDDSANDAGRLLYIGQNEWTHVNCALWSAEV). The segment at 1931–1978 (LRCEFCQKPGATVGCCLTSCTSNYHFMCSRAKNCVFLDDKKVYCQRHR) adopts a PHD-type 4 zinc-finger fold. The 57-residue stretch at 2018 to 2074 (NIHMMIGSMTIDCLGILNDLSDCEDKLFPIGYQCSRVYWSTTDARKRCVYTCKIVEC) folds into the FYR N-terminal domain. 7 disordered regions span residues 2081–2133 (PDIN…TSGS), 2145–2232 (IRTP…TTGT), 2275–2333 (NKNS…KLAP), 2373–2460 (RGQR…EGNL), 2475–2618 (GQRP…RYPR), 2647–2675 (FYSSSTGKKRGKRSAEGQVDGADDLSTSD), and 2713–2821 (KISQ…KNLL). Positions 2095–2115 (IAHSPTSFTESSSKESQNTAE) are enriched in polar residues. Ser2098 is subject to Phosphoserine. Phosphothreonine is present on Thr2147. Phosphoserine is present on residues Ser2151 and Ser2201. Polar residues predominate over residues 2214-2232 (RTGNTYSRNNVSSVSTTGT). Over residues 2283-2302 (SSSSEMKQSSASDLVSKSSS) the composition is skewed to low complexity. Polar residues-rich tracts occupy residues 2310 to 2319 (VLSSKSSEGS) and 2406 to 2421 (GMSNRSSIINEHMGSS). The span at 2432–2442 (SCKETFKEKHS) shows a compositional bias: basic and acidic residues. Thr2525 carries the phosphothreonine modification. Lys2528 is covalently cross-linked (Glycyl lysine isopeptide (Lys-Gly) (interchain with G-Cter in SUMO2)). 2 stretches are compositionally biased toward polar residues: residues 2543 to 2563 (SPASPLQIESTSPTEPISASE) and 2573 to 2592 (PSPNNTSCQDSQSNNYQNLP). At Ser2611 the chain carries Phosphoserine. Polar residues predominate over residues 2726–2741 (SDTSVTATTRKSSQIP). Positions 2744–2782 (NGKENGTENLKIDRPEDAGEKEHVTKSSVGHKNEPKMDN) are enriched in basic and acidic residues. A compositionally biased stretch (polar residues) spans 2784–2795 (HSVSRVKTQGQD). Ser2796 bears the Phosphoserine mark. Residues 2796-2805 (SLEAQLSSLE) are compositionally biased toward low complexity. The segment covering 2812–2821 (TSTPSDKNLL) has biased composition (polar residues). The 9aaTAD signature appears at 2847 to 2855 (SDIMDFVLK). Ser2955 carries the phosphoserine modification. The residue at position 2958 (Lys2958) is an N6-acetyllysine. Disordered regions lie at residues 2961–3064 (TITE…NAAV) and 3166–3244 (PAAT…SNIA). 2 stretches are compositionally biased toward polar residues: residues 2963 to 2972 (TEKSVASSES) and 3016 to 3030 (HGNNQDLTRNSSTPG). Position 3036 is a phosphoserine (Ser3036). A compositionally biased stretch (polar residues) spans 3039–3064 (VPIQNQKYVPNSTDSPGPSQISNAAV). Residues 3171–3182 (SSFPPNISNPPS) show a composition bias toward low complexity. A compositionally biased stretch (polar residues) spans 3198 to 3216 (VSESSQRTDLSTTVATPSS). Basic residues predominate over residues 3218–3233 (LKKRPISRLQTRKNKK). A Phosphothreonine modification is found at Thr3372. Position 3462 is an N6-acetyllysine (Lys3462). Disordered regions lie at residues 3464 to 3608 (GIHS…GQPA) and 3620 to 3643 (TQNPANEQESAEPKTVEEEESNFS). Residues 3476-3489 (SGPQVSNFTQTVDA) are compositionally biased toward polar residues. Low complexity predominate over residues 3508 to 3529 (SPTSPGGSPSSPSSGQRSASPS). Residues Ser3511, Ser3515, and Ser3527 each carry the phosphoserine modification. Residues 3591-3603 (QDTASVEQSSQKE) show a composition bias toward polar residues. One can recognise an FYR C-terminal domain in the interval 3666–3747 (KKGLVFEISS…KHCRNYKFRF (82 aa)). The short motif at 3762–3767 (GSARAE) is the WDR5 interaction motif (WIN) element. The segment at 3785-3808 (HRQPPEYNPNDEEEEEVQLKSARR) is disordered. Residues 3829-3945 (EAVGVYRSPI…RGEELTYDYK (117 aa)) form the SET domain. His3839 and Arg3841 together coordinate S-adenosyl-L-methionine. The residue at position 3882 (Cys3882) is an S-methylcysteine; by autocatalysis. Residues Tyr3883 and 3906 to 3907 (NH) each bind S-adenosyl-L-methionine. Positions 3909 and 3957 each coordinate Zn(2+). Residues 3953-3969 (NKLPCNCGAKKCRKFLN) enclose the Post-SET domain. Residue Asn3958 participates in S-adenosyl-L-methionine binding. Residues Cys3959 and Cys3964 each contribute to the Zn(2+) site.

This sequence belongs to the class V-like SAM-binding methyltransferase superfamily. Histone-lysine methyltransferase family. TRX/MLL subfamily. MLL cleavage product N320 heterodimerizes with MLL cleavage product C180 (via SET and FYRC domains). Component of some MLL1/MLL complex, at least composed of the core components KMT2A/MLL1, ASH2L, HCFC1/HCF1, HCFC2, WDR5, DPY30 and RBBP5, as well as the facultative components BACC1, CHD8, E2F6, HSP70, INO80C, KANSL1, LAS1L, MAX, MCRS1, MEN1, MGA, KAT8/MOF, PELP1, PHF20, PRP31, RING2, RUVB1/TIP49A, RUVB2/TIP49B, SENP3, TAF1, TAF4, TAF6, TAF7, TAF9 and TEX10. Forms a core complex with the evolutionary conserved subcomplex WRAD composed of WDR5, RBBP5, ASH2L/ASH2 and DPY30 subunits; WRAD differentially stimulates the methyltransferase activity. Interacts (via WIN motif) with WDR5; the interaction is direct. Interaction with WDR5 is required for stable interaction with ASH2L and RBBP5, and thereby also for optimal histone methyltransferase activity. Interacts with KAT8/MOF; the interaction is direct. Interacts with SBF1 and PPP1R15A. Interacts with ZNF335. Interacts with CLOCK and BMAL1 in a circadian manner. Interacts with PPIE; this results in decreased histone H3 methyltransferase activity. Interacts with CREBBP. Interacts with the WRAD complex composed of WDR5, RBBP5, ASH2L and DPY30. Interacts (via MBM motif) with MEN1. Interacts (via IBM motifs) with PSIP1 (via IBD domain) with moderate affinity whereas the KMT2A-MEN1 complex interacts with a greater affinity; MEN1 enhances interaction of KMT2A with PSIP1. Phosphorylation increases its affinity for PSIP1. Forms a complex with CREBBP and CREB1. As to quaternary structure, (Microbial infection) Interacts with herpes virus 8/HHV-8 protein LANA1; this interaction regulates the MLL1 histone methyltransferase activity on viral DNA. In terms of processing, proteolytic cleavage by TASP1 generates MLL cleavage product N320 and MLL cleavage product C180, which reassemble through a non-covalent association. 2 cleavage sites exist, cleavage site 1 (CS1) and cleavage site 2 (CS2), to generate MLL cleavage products N320 and C180. CS2 is the major site. Post-translationally, phosphorylation increases its interaction with PSIP1. Auto-methylated at Cys-3882: auto-methylation is inhibited by the WRAD complex and unmodified histone H3. As to expression, heart, lung, brain and T- and B-lymphocytes.

Its subcellular location is the nucleus. The catalysed reaction is L-lysyl(4)-[histone H3] + S-adenosyl-L-methionine = N(6)-methyl-L-lysyl(4)-[histone H3] + S-adenosyl-L-homocysteine + H(+). The enzyme catalyses N(6)-methyl-L-lysyl(4)-[histone H3] + S-adenosyl-L-methionine = N(6),N(6)-dimethyl-L-lysyl(4)-[histone H3] + S-adenosyl-L-homocysteine + H(+). It catalyses the reaction L-cysteinyl-[protein] + S-adenosyl-L-methionine = S-methyl-L-cysteinyl-[protein] + S-adenosyl-L-homocysteine + H(+). In terms of biological role, histone methyltransferase that plays an essential role in early development and hematopoiesis. Catalytic subunit of the MLL1/MLL complex, a multiprotein complex that mediates both methylation of 'Lys-4' of histone H3 (H3K4me) complex and acetylation of 'Lys-16' of histone H4 (H4K16ac). Catalyzes methyl group transfer from S-adenosyl-L-methionine to the epsilon-amino group of 'Lys-4' of histone H3 (H3K4) via a non-processive mechanism. Part of chromatin remodeling machinery predominantly forms H3K4me1 and H3K4me2 methylation marks at active chromatin sites where transcription and DNA repair take place. Has weak methyltransferase activity by itself, and requires other component of the MLL1/MLL complex to obtain full methyltransferase activity. Has no activity toward histone H3 phosphorylated on 'Thr-3', less activity toward H3 dimethylated on 'Arg-8' or 'Lys-9', while it has higher activity toward H3 acetylated on 'Lys-9'. Binds to unmethylated CpG elements in the promoter of target genes and helps maintain them in the nonmethylated state. Required for transcriptional activation of HOXA9. Promotes PPP1R15A-induced apoptosis. Plays a critical role in the control of circadian gene expression and is essential for the transcriptional activation mediated by the CLOCK-BMAL1 heterodimer. Establishes a permissive chromatin state for circadian transcription by mediating a rhythmic methylation of 'Lys-4' of histone H3 (H3K4me) and this histone modification directs the circadian acetylation at H3K9 and H3K14 allowing the recruitment of CLOCK-BMAL1 to chromatin. Also has auto-methylation activity on Cys-3882 in absence of histone H3 substrate. The sequence is that of Histone-lysine N-methyltransferase 2A (KMT2A) from Homo sapiens (Human).